We begin with the raw amino-acid sequence, 352 residues long: Uroporphyrinogen decarboxylase (352 aa).

Substrate-binding positions include 26–30, Asp76, Tyr153, Ser208, and His323; that span reads RQAGR.

It belongs to the uroporphyrinogen decarboxylase family. In terms of assembly, homodimer.

It is found in the cytoplasm. It carries out the reaction uroporphyrinogen III + 4 H(+) = coproporphyrinogen III + 4 CO2. The protein operates within porphyrin-containing compound metabolism; protoporphyrin-IX biosynthesis; coproporphyrinogen-III from 5-aminolevulinate: step 4/4. Its function is as follows. Catalyzes the decarboxylation of four acetate groups of uroporphyrinogen-III to yield coproporphyrinogen-III. This chain is Uroporphyrinogen decarboxylase, found in Prochlorococcus marinus (strain NATL2A).